The sequence spans 155 residues: Endoribonuclease YbeY (155 aa).

Zn(2+)-binding residues include His120, His124, and His130.

This sequence belongs to the endoribonuclease YbeY family. It depends on Zn(2+) as a cofactor.

It localises to the cytoplasm. Functionally, single strand-specific metallo-endoribonuclease involved in late-stage 70S ribosome quality control and in maturation of the 3' terminus of the 16S rRNA. The protein is Endoribonuclease YbeY of Staphylococcus epidermidis (strain ATCC 35984 / DSM 28319 / BCRC 17069 / CCUG 31568 / BM 3577 / RP62A).